A 312-amino-acid chain; its full sequence is R2-like ligand binding oxidase (312 aa).

Mn(2+) is bound by residues glutamate 68, glutamate 101, and histidine 104. Residues 71-162 constitute a cross-link (3-(O4'-tyrosyl)-valine (Val-Tyr)); sequence VTQDIQPFMA…AAQVRASVTY (92 aa). Fe cation is bound at residue glutamate 101. Fe cation-binding residues include glutamate 167, glutamate 202, and histidine 205.

This sequence belongs to the ribonucleoside diphosphate reductase small chain family. R2-like ligand binding oxidase subfamily. Homodimer. The cofactor is Fe cation. Mn(2+) is required as a cofactor.

Its function is as follows. Probable oxidase that might be involved in lipid metabolism. This chain is R2-like ligand binding oxidase, found in Mycolicibacterium vanbaalenii (strain DSM 7251 / JCM 13017 / BCRC 16820 / KCTC 9966 / NRRL B-24157 / PYR-1) (Mycobacterium vanbaalenii).